A 332-amino-acid polypeptide reads, in one-letter code: Transaldolase (332 aa).

The active-site Schiff-base intermediate with substrate is the Lys135.

Belongs to the transaldolase family. Type 1 subfamily. Homodimer.

It is found in the cytoplasm. It carries out the reaction D-sedoheptulose 7-phosphate + D-glyceraldehyde 3-phosphate = D-erythrose 4-phosphate + beta-D-fructose 6-phosphate. The protein operates within carbohydrate degradation; pentose phosphate pathway; D-glyceraldehyde 3-phosphate and beta-D-fructose 6-phosphate from D-ribose 5-phosphate and D-xylulose 5-phosphate (non-oxidative stage): step 2/3. Transaldolase is important for the balance of metabolites in the pentose-phosphate pathway. The chain is Transaldolase from Prochlorococcus marinus (strain NATL1A).